The following is a 785-amino-acid chain: Solute carrier family 45 member 4 (785 aa).

Residues 1–43 form a disordered region; sequence MKMAPQNADSESMQVQELPVPLPDPQKPRDPEAETQEETTSEG. 6 consecutive transmembrane segments (helical) span residues 64-84, 87-107, 124-144, 156-176, 197-217, and 234-254; these read EFCY…IGLP, YYSL…PLIG, ILAL…GSAI, PIGI…ADAT, LNIH…LGGL, and VLFF…LFSI. Disordered stretches follow at residues 259 to 309 and 401 to 430; these read YSPQ…VQSE and KVPN…SGSM. Phosphoserine occurs at positions 442 and 472. A disordered region spans residues 478-505; the sequence is DLQQRQRSRHRNQSGATASSGDTESEEG. Positions 490–499 are enriched in low complexity; the sequence is QSGATASSGD. Ser502 carries the post-translational modification Phosphoserine. A run of 6 helical transmembrane segments spans residues 525 to 545, 577 to 597, 609 to 629, 631 to 651, 683 to 703, and 709 to 729; these read LMWL…EAVF, MGCW…ALLQ, IIYM…AMFP, VYVA…ISYC, ILSC…GGVV, and IVVI…TATF. Residues 741–772 form a disordered region; the sequence is KEEQKGLSSGPAGEGEGGAGSEKPTVLKLSRK. A Phosphoserine modification is found at Ser749.

The protein belongs to the glycoside-pentoside-hexuronide (GPH) cation symporter transporter (TC 2.A.2) family. Ubiquitously expressed.

The protein resides in the membrane. The enzyme catalyses sucrose(out) + H(+)(out) = sucrose(in) + H(+)(in). Its function is as follows. Proton-associated sucrose transporter. May be able to transport also glucose and fructose. The sequence is that of Solute carrier family 45 member 4 (Slc45a4) from Mus musculus (Mouse).